The chain runs to 274 residues: Dehydration-responsive element-binding protein 2A (274 aa).

Composition is skewed to basic and acidic residues over residues 1 to 10 (MERGEGRRGD) and 35 to 50 (KWWK…ENSS). Residues 1–75 (MERGEGRRGD…KGGPENSNCA (75 aa)) form a disordered region. The AP2/ERF DNA-binding region spans 75-132 (AYRGVRQRTWGKWVAEIREPNRGRRLWLGSFPTALEAAHAYDEAARAMYGPTARVNFA).

The protein belongs to the AP2/ERF transcription factor family. ERF subfamily.

It localises to the nucleus. Functionally, transcriptional activator that binds specifically to the DNA sequence 5'-[AG]CCGAC-3' of the cis-acting dehydration-responsive element (DRE). Binding to the C-repeat/DRE element mediates high salinity- and dehydration-inducible transcription. The protein is Dehydration-responsive element-binding protein 2A (DREB2A) of Oryza sativa subsp. japonica (Rice).